The chain runs to 452 residues: Bifunctional protein GlmU (452 aa).

The segment at 1–226 is pyrophosphorylase; it reads MVAVAILAAG…SQEILGINDR (226 aa). UDP-N-acetyl-alpha-D-glucosamine-binding positions include 7–10, lysine 21, glutamine 73, and 78–79; these read LAAG and GT. Aspartate 103 contributes to the Mg(2+) binding site. Glycine 140, glutamate 155, asparagine 170, and asparagine 224 together coordinate UDP-N-acetyl-alpha-D-glucosamine. Position 224 (asparagine 224) interacts with Mg(2+). Residues 227–247 form a linker region; sequence LQLADSFRILQERIRQQWMLA. Residues 248 to 452 are N-acetyltransferase; the sequence is GVTLVDPTSI…ENWSTPTTEQ (205 aa). 2 residues coordinate UDP-N-acetyl-alpha-D-glucosamine: arginine 329 and lysine 347. Histidine 359 acts as the Proton acceptor in catalysis. 2 residues coordinate UDP-N-acetyl-alpha-D-glucosamine: tyrosine 362 and asparagine 373. Residues alanine 376, 382 to 383, alanine 419, and arginine 436 each bind acetyl-CoA; that span reads NY.

The protein in the N-terminal section; belongs to the N-acetylglucosamine-1-phosphate uridyltransferase family. In the C-terminal section; belongs to the transferase hexapeptide repeat family. In terms of assembly, homotrimer. It depends on Mg(2+) as a cofactor.

It localises to the cytoplasm. It catalyses the reaction alpha-D-glucosamine 1-phosphate + acetyl-CoA = N-acetyl-alpha-D-glucosamine 1-phosphate + CoA + H(+). It carries out the reaction N-acetyl-alpha-D-glucosamine 1-phosphate + UTP + H(+) = UDP-N-acetyl-alpha-D-glucosamine + diphosphate. The protein operates within nucleotide-sugar biosynthesis; UDP-N-acetyl-alpha-D-glucosamine biosynthesis; N-acetyl-alpha-D-glucosamine 1-phosphate from alpha-D-glucosamine 6-phosphate (route II): step 2/2. It participates in nucleotide-sugar biosynthesis; UDP-N-acetyl-alpha-D-glucosamine biosynthesis; UDP-N-acetyl-alpha-D-glucosamine from N-acetyl-alpha-D-glucosamine 1-phosphate: step 1/1. Its pathway is bacterial outer membrane biogenesis; LPS lipid A biosynthesis. Functionally, catalyzes the last two sequential reactions in the de novo biosynthetic pathway for UDP-N-acetylglucosamine (UDP-GlcNAc). The C-terminal domain catalyzes the transfer of acetyl group from acetyl coenzyme A to glucosamine-1-phosphate (GlcN-1-P) to produce N-acetylglucosamine-1-phosphate (GlcNAc-1-P), which is converted into UDP-GlcNAc by the transfer of uridine 5-monophosphate (from uridine 5-triphosphate), a reaction catalyzed by the N-terminal domain. This chain is Bifunctional protein GlmU, found in Synechococcus sp. (strain ATCC 27144 / PCC 6301 / SAUG 1402/1) (Anacystis nidulans).